A 461-amino-acid chain; its full sequence is Argininosuccinate lyase (461 aa).

This sequence belongs to the lyase 1 family. Argininosuccinate lyase subfamily.

The protein localises to the cytoplasm. It catalyses the reaction 2-(N(omega)-L-arginino)succinate = fumarate + L-arginine. The protein operates within amino-acid biosynthesis; L-arginine biosynthesis; L-arginine from L-ornithine and carbamoyl phosphate: step 3/3. The protein is Argininosuccinate lyase of Limosilactobacillus reuteri subsp. reuteri (strain JCM 1112) (Lactobacillus reuteri).